Reading from the N-terminus, the 384-residue chain is 8-amino-7-oxononanoate synthase (384 aa).

Arg-21 contributes to the substrate binding site. Residue 108–109 (GF) coordinates pyridoxal 5'-phosphate. His-133 contacts substrate. 3 residues coordinate pyridoxal 5'-phosphate: Ser-179, His-207, and Thr-233. Lys-236 is subject to N6-(pyridoxal phosphate)lysine. Thr-352 provides a ligand contact to substrate.

This sequence belongs to the class-II pyridoxal-phosphate-dependent aminotransferase family. BioF subfamily. Homodimer. The cofactor is pyridoxal 5'-phosphate.

The enzyme catalyses 6-carboxyhexanoyl-[ACP] + L-alanine + H(+) = (8S)-8-amino-7-oxononanoate + holo-[ACP] + CO2. Its pathway is cofactor biosynthesis; biotin biosynthesis. Functionally, catalyzes the decarboxylative condensation of pimeloyl-[acyl-carrier protein] and L-alanine to produce 8-amino-7-oxononanoate (AON), [acyl-carrier protein], and carbon dioxide. The protein is 8-amino-7-oxononanoate synthase of Shigella sonnei (strain Ss046).